The primary structure comprises 138 residues: HTH-type transcriptional regulator CueR (138 aa).

Residues 1–69 (MNISDVAKKT…LEECGELVNL (69 aa)) form the HTH merR-type domain. A DNA-binding region (H-T-H motif) is located at residues 4-23 (SDVAKKTGLTSKAIRFYEEK). Cu(+) contacts are provided by cysteine 112 and cysteine 120.

In terms of assembly, homodimer.

The protein localises to the cytoplasm. In terms of biological role, regulates the transcription of the copA and cuiD (cueO) genes. Detects cytoplasmic copper stress and activates transcription in response to increasing copper concentrations. The sequence is that of HTH-type transcriptional regulator CueR (cueR) from Salmonella typhimurium (strain LT2 / SGSC1412 / ATCC 700720).